We begin with the raw amino-acid sequence, 711 residues long: Polyribonucleotide nucleotidyltransferase (711 aa).

Mg(2+) contacts are provided by D487 and D493. In terms of domain architecture, KH spans 554-613 (PRIHTMKISAEKIKDVIGKGGAVIRALTEETGTTIEIEDDGTIKIAATEGAAAKEAIRRI). An S1 motif domain is found at 623-691 (GRIYTGKVAR…RQGRVRLSMK (69 aa)). Residues 691–711 (KEAVEKPAEEAAAEAPAAKEE) form a disordered region.

Belongs to the polyribonucleotide nucleotidyltransferase family. Component of the RNA degradosome, which is a multiprotein complex involved in RNA processing and mRNA degradation. Mg(2+) serves as cofactor.

The protein resides in the cytoplasm. It catalyses the reaction RNA(n+1) + phosphate = RNA(n) + a ribonucleoside 5'-diphosphate. Involved in mRNA degradation. Catalyzes the phosphorolysis of single-stranded polyribonucleotides processively in the 3'- to 5'-direction. The chain is Polyribonucleotide nucleotidyltransferase from Vibrio parahaemolyticus serotype O3:K6 (strain RIMD 2210633).